Reading from the N-terminus, the 193-residue chain is Probable nicotinate-nucleotide adenylyltransferase (193 aa).

The protein belongs to the NadD family.

It carries out the reaction nicotinate beta-D-ribonucleotide + ATP + H(+) = deamido-NAD(+) + diphosphate. The protein operates within cofactor biosynthesis; NAD(+) biosynthesis; deamido-NAD(+) from nicotinate D-ribonucleotide: step 1/1. Its function is as follows. Catalyzes the reversible adenylation of nicotinate mononucleotide (NaMN) to nicotinic acid adenine dinucleotide (NaAD). The polypeptide is Probable nicotinate-nucleotide adenylyltransferase (Flavobacterium psychrophilum (strain ATCC 49511 / DSM 21280 / CIP 103535 / JIP02/86)).